The sequence spans 900 residues: Bifunctional uridylyltransferase/uridylyl-removing enzyme (900 aa).

The tract at residues 1-342 (MPQVDPELFD…WEGESGPIVP (342 aa)) is uridylyltransferase. The interval 343-705 (LNSRFQVRDG…TTQREFEGGT (363 aa)) is uridylyl-removing. In terms of domain architecture, HD spans 461–583 (VDAHTLNVIK…VGDETHLDYL (123 aa)). 2 consecutive ACT domains span residues 706 to 789 (QIFI…IIQR) and 816 to 896 (ILEI…PSPS).

Belongs to the GlnD family. Mg(2+) is required as a cofactor.

It catalyses the reaction [protein-PII]-L-tyrosine + UTP = [protein-PII]-uridylyl-L-tyrosine + diphosphate. It carries out the reaction [protein-PII]-uridylyl-L-tyrosine + H2O = [protein-PII]-L-tyrosine + UMP + H(+). Its activity is regulated as follows. Uridylyltransferase (UTase) activity is inhibited by glutamine, while glutamine activates uridylyl-removing (UR) activity. Modifies, by uridylylation and deuridylylation, the PII regulatory proteins (GlnB and homologs), in response to the nitrogen status of the cell that GlnD senses through the glutamine level. Under low glutamine levels, catalyzes the conversion of the PII proteins and UTP to PII-UMP and PPi, while under higher glutamine levels, GlnD hydrolyzes PII-UMP to PII and UMP (deuridylylation). Thus, controls uridylylation state and activity of the PII proteins, and plays an important role in the regulation of nitrogen fixation and metabolism. The polypeptide is Bifunctional uridylyltransferase/uridylyl-removing enzyme (Stutzerimonas stutzeri (strain A1501) (Pseudomonas stutzeri)).